A 175-amino-acid polypeptide reads, in one-letter code: MSERIIMDDAAIQRTVTRIAHEILEYNKGTDNLILLGIKTRGEYLANRIQDKIHQIEQQRIPTGTIDITYFRDDIEHMSSLTTKDAIDIDTDITDKVVIIIDDVLYTGRTVRASLDAILLNARPIKIGLAVLVDRGHRELPIRADFVGKNIPTSKEETVSVYLEEMDQRNAVIIK.

The PRPP-binding motif lies at V98–T110.

Belongs to the purine/pyrimidine phosphoribosyltransferase family. PyrR subfamily. In terms of assembly, homodimer and homohexamer; in equilibrium.

The catalysed reaction is UMP + diphosphate = 5-phospho-alpha-D-ribose 1-diphosphate + uracil. In terms of biological role, regulates transcriptional attenuation of the pyrimidine nucleotide (pyr) operon by binding in a uridine-dependent manner to specific sites on pyr mRNA. This disrupts an antiterminator hairpin in the RNA and favors formation of a downstream transcription terminator, leading to a reduced expression of downstream genes. Its function is as follows. Also displays a weak uracil phosphoribosyltransferase activity which is not physiologically significant. The chain is Bifunctional protein PyrR from Staphylococcus aureus (strain bovine RF122 / ET3-1).